Reading from the N-terminus, the 95-residue chain is Aspartyl/glutamyl-tRNA(Asn/Gln) amidotransferase subunit C (95 aa).

Belongs to the GatC family. Heterotrimer of A, B and C subunits.

It carries out the reaction L-glutamyl-tRNA(Gln) + L-glutamine + ATP + H2O = L-glutaminyl-tRNA(Gln) + L-glutamate + ADP + phosphate + H(+). It catalyses the reaction L-aspartyl-tRNA(Asn) + L-glutamine + ATP + H2O = L-asparaginyl-tRNA(Asn) + L-glutamate + ADP + phosphate + 2 H(+). In terms of biological role, allows the formation of correctly charged Asn-tRNA(Asn) or Gln-tRNA(Gln) through the transamidation of misacylated Asp-tRNA(Asn) or Glu-tRNA(Gln) in organisms which lack either or both of asparaginyl-tRNA or glutaminyl-tRNA synthetases. The reaction takes place in the presence of glutamine and ATP through an activated phospho-Asp-tRNA(Asn) or phospho-Glu-tRNA(Gln). The polypeptide is Aspartyl/glutamyl-tRNA(Asn/Gln) amidotransferase subunit C (Syntrophus aciditrophicus (strain SB)).